A 223-amino-acid polypeptide reads, in one-letter code: MNRIIPPENLPELLERAHMMAGVSLAQIAAQRGLSVPKDLKRDKGWVGQLIEMELGATAGSKPEQDFLHLGVELKTIPIDSQGRPLETTYVCVAPLSNIQGLTWQNSLVCHKLQRVLWVPVEGERHIPVAERRIGTPILWEPDPQELQLLQQDWEEIMELIALGKVEKLTARHGEVLQLRPKAANSKALTQSIAEDGSLKMTNPRGFYLKTSFTAMILNKVFG.

It belongs to the MutH family.

The protein localises to the cytoplasm. In terms of biological role, sequence-specific endonuclease that cleaves unmethylated GATC sequences. It is involved in DNA mismatch repair. The sequence is that of DNA mismatch repair protein MutH from Shewanella baltica (strain OS185).